The chain runs to 463 residues: ATP-dependent protease ATPase subunit HslU (463 aa).

Residues Val-21, 63 to 68, Asp-276, Glu-341, and Arg-413 each bind ATP; that span reads GVGKTE.

This sequence belongs to the ClpX chaperone family. HslU subfamily. In terms of assembly, a double ring-shaped homohexamer of HslV is capped on each side by a ring-shaped HslU homohexamer. The assembly of the HslU/HslV complex is dependent on binding of ATP.

It localises to the cytoplasm. Its function is as follows. ATPase subunit of a proteasome-like degradation complex; this subunit has chaperone activity. The binding of ATP and its subsequent hydrolysis by HslU are essential for unfolding of protein substrates subsequently hydrolyzed by HslV. HslU recognizes the N-terminal part of its protein substrates and unfolds these before they are guided to HslV for hydrolysis. The polypeptide is ATP-dependent protease ATPase subunit HslU (Thermotoga petrophila (strain ATCC BAA-488 / DSM 13995 / JCM 10881 / RKU-1)).